The sequence spans 121 residues: UPF0344 protein BCA_1194 (121 aa).

Helical transmembrane passes span Ile-6–Gly-26, Leu-38–Ala-58, Trp-65–Val-85, and Ala-92–Leu-112.

This sequence belongs to the UPF0344 family.

It localises to the cell membrane. The sequence is that of UPF0344 protein BCA_1194 from Bacillus cereus (strain 03BB102).